We begin with the raw amino-acid sequence, 47 residues long: Delta-actitoxin-Aspp1b (47 aa).

3 disulfide bridges follow: C4/C44, C6/C34, and C27/C45.

Belongs to the sea anemone sodium channel inhibitory toxin family. Type I subfamily.

The protein resides in the secreted. The protein localises to the nematocyst. Functionally, binds specifically to voltage-gated sodium channels (Nav), thereby delaying their inactivation during signal transduction. Has a longer mammalian heart stimulation effect than Hk2a, Hk8a and Hk16a. The polypeptide is Delta-actitoxin-Aspp1b (Anthopleura sp. (strain 'Zhanjiang') (Sea anemone)).